The chain runs to 313 residues: Ribosomal protein uL3 glutamine methyltransferase (313 aa).

It belongs to the protein N5-glutamine methyltransferase family. PrmB subfamily.

It carries out the reaction L-glutaminyl-[ribosomal protein uL3] + S-adenosyl-L-methionine = N(5)-methyl-L-glutaminyl-[ribosomal protein uL3] + S-adenosyl-L-homocysteine + H(+). Methylates large ribosomal subunit protein uL3 on a specific glutamine residue. This Pasteurella multocida (strain Pm70) protein is Ribosomal protein uL3 glutamine methyltransferase.